Consider the following 437-residue polypeptide: Serine carboxypeptidase-like 7 (437 aa).

The N-terminal stretch at Met1–Ser25 is a signal peptide. Disulfide bonds link Cys84–Cys327, Cys248–Cys262, and Cys286–Cys293. The N-linked (GlcNAc...) asparagine glycan is linked to Asn105. Residue Ser180 is part of the active site. An N-linked (GlcNAc...) asparagine glycan is attached at Asn346. Asp362 is an active-site residue. N-linked (GlcNAc...) asparagine glycosylation is present at Asn378. His415 is a catalytic residue.

Belongs to the peptidase S10 family. Ubiquitous.

The protein resides in the secreted. Probable carboxypeptidase. The sequence is that of Serine carboxypeptidase-like 7 (SCPL7) from Arabidopsis thaliana (Mouse-ear cress).